A 454-amino-acid polypeptide reads, in one-letter code: Probable ECA polymerase (454 aa).

The next 11 helical transmembrane spans lie at 3 to 23 (LGQFGGLFCIYLIAVIFILTL), 39 to 59 (FSMLYLLTFYFGFPLTCMLVF), 61 to 81 (FGVAVVPVEYLLYAMLSATAF), 119 to 139 (LALVAVGTVGIFFMQNGFLLF), 154 to 174 (GVALKRFFYFFIPAMLVVYFL), 180 to 200 (AWFFFLASTVAFGILTYVIVG), 201 to 221 (GTRANIIIAFSLFLFIGIVRG), 222 to 242 (WITLWMLAAAGVFGIVGMFWL), 340 to 360 (LVVMGGVLFIPLGAIVVGLII), 377 to 397 (YKAAILQSFCFGAVFNIIVLA), and 409 to 429 (VFFCVIFGACLVLAKLLYWLF).

Belongs to the WzyE family. Probably part of a complex composed of WzxE, WzyE and WzzE.

It is found in the cell inner membrane. Its pathway is bacterial outer membrane biogenesis; enterobacterial common antigen biosynthesis. Its function is as follows. Probably involved in the polymerization of enterobacterial common antigen (ECA) trisaccharide repeat units. The polypeptide is Probable ECA polymerase (Yersinia pestis bv. Antiqua (strain Angola)).